Reading from the N-terminus, the 565-residue chain is NAD-dependent malic enzyme (565 aa).

Tyr104 acts as the Proton donor in catalysis. Position 157 (Arg157) interacts with NAD(+). The active-site Proton acceptor is Lys175. A divalent metal cation contacts are provided by Glu246, Asp247, and Asp270. Residues Asp270 and Asn418 each coordinate NAD(+).

This sequence belongs to the malic enzymes family. Homotetramer. Mg(2+) is required as a cofactor. Requires Mn(2+) as cofactor.

The catalysed reaction is (S)-malate + NAD(+) = pyruvate + CO2 + NADH. The enzyme catalyses oxaloacetate + H(+) = pyruvate + CO2. This is NAD-dependent malic enzyme from Escherichia coli O6:H1 (strain CFT073 / ATCC 700928 / UPEC).